The primary structure comprises 927 residues: Autophagy-related protein 13 (927 aa).

Disordered stretches follow at residues 1-66 (MHQQ…PPAD), 334-359 (SLPQ…RSKP), 388-559 (LRSV…AQPG), 628-716 (TESM…TIRE), and 786-927 (QMQL…RRGW). The span at 14–30 (PGATTQPNLPSRSNSTR) shows a compositional bias: polar residues. Composition is skewed to polar residues over residues 393 to 402 (QPGSDTSSPP), 513 to 523 (PASTSRYSSSF), and 544 to 557 (GSSG…SVAQ). The span at 630 to 671 (SMTSSVQMQRSSSSSSRQLTSVPGMTAPASVSASSSPGKPLS) shows a compositional bias: low complexity. Residues 684-716 (LSENSIIDYSGQGRITSRQGRTSDNTQPGTIRE) are compositionally biased toward polar residues. Residues 793 to 803 (STQRPSDRLEP) are compositionally biased toward basic and acidic residues. The span at 850 to 868 (HKQTPPQSSRGSFNGSLNR) shows a compositional bias: polar residues. A compositionally biased stretch (basic and acidic residues) spans 891–901 (PQGRRSIEEAR).

It belongs to the ATG13 family. Fungi subfamily. As to quaternary structure, hypophosphorylated form interacts with ATG1 to form the ATG1-ATG13 kinase complex. The ATG1-ATG13 complex interacts with the ATG17-ATG29-ATG31 complex through direct interaction with ATG17.

The protein localises to the cytoplasm. It is found in the preautophagosomal structure. Functionally, activates the ATG1 kinase in a nutritional condition dependent manner through the TOR pathway, leading to autophagy. Involved in ATG9 and ATG23 cycling through the pre-autophagosomal structure. Also involved in cytoplasm to vacuole transport (Cvt) and more specifically in Cvt vesicle formation. Seems to play a role in the switching machinery regulating the conversion between the Cvt pathway and autophagy. Finally, ATG13 is also required for glycogen storage during stationary phase. Autophagy is required for proper vegetative growth, asexual/sexual reproduction, and full virulence. Autophagy is particularly involved in the biosynthesis of deoxynivalenol (DON), an important virulence determinant. This Gibberella zeae (strain ATCC MYA-4620 / CBS 123657 / FGSC 9075 / NRRL 31084 / PH-1) (Wheat head blight fungus) protein is Autophagy-related protein 13.